We begin with the raw amino-acid sequence, 3763 residues long: Colossin-B (3763 aa).

Residues methionine 1–serine 19 form the signal peptide. N-linked (GlcNAc...) asparagine glycosylation is found at asparagine 43, asparagine 110, asparagine 258, and asparagine 284. Residues aspartate 619–isoleucine 643 enclose the Follistatin-like 1 domain. Asparagine 652 and asparagine 672 each carry an N-linked (GlcNAc...) asparagine glycan. 2 Follistatin-like domains span residues histidine 701–phenylalanine 724 and proline 729–phenylalanine 752. The tract at residues proline 792–lysine 832 is disordered. A compositionally biased stretch (low complexity) spans proline 810–proline 820. N-linked (GlcNAc...) asparagine glycosylation is found at asparagine 845 and asparagine 991. Disordered stretches follow at residues leucine 1033–serine 1068 and proline 1095–threonine 1124. The segment covering serine 1036 to glycine 1051 has biased composition (gly residues). 2 stretches are compositionally biased toward low complexity: residues serine 1052–serine 1068 and proline 1099–threonine 1124. An N-linked (GlcNAc...) asparagine glycan is attached at asparagine 1054. One can recognise a CNA-B 1 domain in the interval valine 1159 to serine 1227. 2 N-linked (GlcNAc...) asparagine glycosylation sites follow: asparagine 1229 and asparagine 1247. The CNA-B 2 domain occupies isoleucine 1304–serine 1373. Asparagine 1381 carries N-linked (GlcNAc...) asparagine glycosylation. CNA-B domains lie at leucine 1437–lysine 1515, valine 1582–aspartate 1648, and valine 1731–serine 1809. Residues asparagine 1769 and asparagine 1815 are each glycosylated (N-linked (GlcNAc...) asparagine). The interval glycine 1883–glutamate 1955 is disordered. A compositionally biased stretch (low complexity) spans serine 1898–glutamine 1948. In terms of domain architecture, CNA-B 6 spans valine 2015–asparagine 2083. N-linked (GlcNAc...) asparagine glycosylation is found at asparagine 2128, asparagine 2145, asparagine 2243, asparagine 2294, asparagine 2351, asparagine 2378, asparagine 2453, asparagine 2493, asparagine 2496, asparagine 2516, asparagine 2572, asparagine 2601, asparagine 2624, asparagine 2668, asparagine 2698, asparagine 2714, asparagine 2781, asparagine 2787, asparagine 2800, asparagine 2838, and asparagine 2858. Residues phenylalanine 2143–tyrosine 2197 enclose the CNA-B 7 domain. Residues valine 2292 to asparagine 2345 enclose the CNA-B 8 domain. In terms of domain architecture, CNA-B 9 spans asparagine 2453–phenylalanine 2477. One can recognise a CNA-B 10 domain in the interval valine 2713–aspartate 2766. Positions leucine 2984–tyrosine 3061 constitute a CNA-B 11 domain. Asparagine 3083, asparagine 3130, asparagine 3372, asparagine 3390, asparagine 3459, asparagine 3466, asparagine 3557, asparagine 3666, asparagine 3676, and asparagine 3681 each carry an N-linked (GlcNAc...) asparagine glycan. A CNA-B 12 domain is found at tyrosine 3128 to isoleucine 3201. The CNA-B 13 domain maps to methionine 3664–asparagine 3733.

The protein belongs to the serine-aspartate repeat-containing protein (SDr) family.

The protein localises to the secreted. In Dictyostelium discoideum (Social amoeba), this protein is Colossin-B (colB).